A 347-amino-acid chain; its full sequence is Transcription factor JunD (347 aa).

The interval 1 to 46 is disordered; sequence METPFYGDEALSGLGGGGSSSGGGGSFASPGRLFPGAPPTAAPGSM. Gly residues predominate over residues 13 to 26; that stretch reads GLGGGGSSSGGGGS. Positions 29 to 41 match the Menin-binding motif (MBM) motif; that stretch reads SPGRLFPGAPPTA. The MAP kinase docking motif; essential for its phosphorylation motif lies at 48-57; sequence KKDALTLSLS. The tract at residues 63–91 is disordered; sequence ALKPAAAPPPGPLRTDGAPGTAPPDGLLA. Serine 92 bears the Phosphoserine mark. Phosphoserine; by MAPK8 is present on serine 102. Threonine 119 bears the Phosphothreonine mark. 2 disordered regions span residues 164–183 and 218–264; these read AAAG…SELA and EPVP…IDMD. The span at 220–231 shows a compositional bias: pro residues; that stretch reads VPFPPPPPPGTL. A phosphoserine mark is found at serine 251, serine 255, and serine 259. The tract at residues 268-295 is basic motif; it reads RIKAERKRLRNRIAASKCRKRKLERISR. The bZIP domain occupies 268–331; it reads RIKAERKRLR…AQLKQKVLSH (64 aa). Residues 296 to 324 are leucine-zipper; sequence LEEKVKTLKSQNTELASTASLLREQVAQL.

This sequence belongs to the bZIP family. Jun subfamily. In terms of assembly, heterodimer; binds DNA as a heterodimer. Component of an AP-1 transcription factor complex composed of JUN-FOS heterodimers. As part of the AP-1 transcription factor complex, forms heterodimers with FOS proteins, thereby binding to the AP-1 consensus sequence and stimulating transcription. Forms heterodimers with FOSB; thereby binding to the AP-1 consensus sequence. Interacts (via MBM motif) with MEN1; this interaction represses transcriptional activation. Interacts with MAPK10; this interaction is inhibited in the presence of MEN1. Phosphorylated by MAP kinases MAPK8 and MAPK10; phosphorylation is inhibited in the presence of MEN1.

It is found in the nucleus. Its function is as follows. Transcription factor binding AP-1 sites. Heterodimerizes with proteins of the FOS family to form an AP-1 transcription factor complex, thereby enhancing their DNA binding activity to an AP-1 consensus sequence 3'-TGA[GC]TCA-5' and enhancing their transcriptional activity. The protein is Transcription factor JunD (JUND) of Bos taurus (Bovine).